Here is a 390-residue protein sequence, read N- to C-terminus: Dynein regulatory complex subunit 5 (390 aa).

LRR repeat units lie at residues 182 to 205 (TETL…MLAS), 210 to 233 (NLSI…ALAK), and 238 to 261 (HSVI…SLAR).

The protein belongs to the DRC5 family. As to quaternary structure, component of the nexin-dynein regulatory complex (N-DRC). Interacts with DRC1, DRC2, DRC3, DRC4, DRC7 and DRC11.

It is found in the cell projection. The protein localises to the cilium. The protein resides in the flagellum. Its subcellular location is the cytoplasm. It localises to the cytoskeleton. It is found in the flagellum axoneme. Its function is as follows. Component of the nexin-dynein regulatory complex (N-DRC) a key regulator of ciliary/flagellar motility which maintains the alignment and integrity of the distal axoneme and regulates microtubule sliding in motile axonemes. May play a role in the assembly of N-DRC. This Chlamydomonas reinhardtii (Chlamydomonas smithii) protein is Dynein regulatory complex subunit 5.